The sequence spans 180 residues: Translation initiation factor IF-3 (180 aa).

This sequence belongs to the IF-3 family. In terms of assembly, monomer.

It localises to the cytoplasm. Functionally, IF-3 binds to the 30S ribosomal subunit and shifts the equilibrium between 70S ribosomes and their 50S and 30S subunits in favor of the free subunits, thus enhancing the availability of 30S subunits on which protein synthesis initiation begins. This chain is Translation initiation factor IF-3, found in Salmonella typhimurium (strain LT2 / SGSC1412 / ATCC 700720).